The sequence spans 100 residues: NADH-quinone oxidoreductase subunit K 2 (100 aa).

A run of 3 helical transmembrane segments spans residues 4-24 (LWWF…GVLL), 28-48 (ILVV…NFIA), and 60-80 (IFAI…LGIL).

It belongs to the complex I subunit 4L family. As to quaternary structure, NDH-1 is composed of 14 different subunits. Subunits NuoA, H, J, K, L, M, N constitute the membrane sector of the complex.

The protein localises to the cell inner membrane. The catalysed reaction is a quinone + NADH + 5 H(+)(in) = a quinol + NAD(+) + 4 H(+)(out). Its function is as follows. NDH-1 shuttles electrons from NADH, via FMN and iron-sulfur (Fe-S) centers, to quinones in the respiratory chain. The immediate electron acceptor for the enzyme in this species is believed to be ubiquinone. Couples the redox reaction to proton translocation (for every two electrons transferred, four hydrogen ions are translocated across the cytoplasmic membrane), and thus conserves the redox energy in a proton gradient. The polypeptide is NADH-quinone oxidoreductase subunit K 2 (Rhizobium etli (strain CIAT 652)).